The chain runs to 361 residues: Histidinol-phosphate aminotransferase (361 aa).

At Lys219 the chain carries N6-(pyridoxal phosphate)lysine.

It belongs to the class-II pyridoxal-phosphate-dependent aminotransferase family. Histidinol-phosphate aminotransferase subfamily. In terms of assembly, homodimer. Pyridoxal 5'-phosphate is required as a cofactor.

It carries out the reaction L-histidinol phosphate + 2-oxoglutarate = 3-(imidazol-4-yl)-2-oxopropyl phosphate + L-glutamate. The protein operates within amino-acid biosynthesis; L-histidine biosynthesis; L-histidine from 5-phospho-alpha-D-ribose 1-diphosphate: step 7/9. This chain is Histidinol-phosphate aminotransferase, found in Acinetobacter baumannii (strain ACICU).